The chain runs to 161 residues: Blue copper protein 1a (161 aa).

The N-terminal stretch at 1-23 is a signal peptide; the sequence is MASSRVVLILSISMVLLSSVAIA. One can recognise a Phytocyanin domain in the interval 24-124; that stretch reads TDHIVGDDKG…QMKLVITVLA (101 aa). Histidine 64 contributes to the Cu cation binding site. Residue asparagine 70 is glycosylated (N-linked (GlcNAc...) asparagine). A disulfide bridge connects residues cysteine 77 and cysteine 111. Cu cation-binding residues include cysteine 105, histidine 110, and methionine 116. Residues 141–161 traverse the membrane as a helical segment; it reads VVSSLFGVVMAIMVAIAVIFA.

Its subcellular location is the membrane. The protein is Blue copper protein 1a of Medicago truncatula (Barrel medic).